A 261-amino-acid chain; its full sequence is MAATGALGSVLCVLTGASRGFGRTLAHLLCPRLLPGSTLLLVSRTEEALKGLAGELAHKYPGVRVRWEAADLGTSEGVSAAVRAAGELQVGAAQKLLIINNAGSIGDVSKMFVDFSDPKEVTDYMMFNVSSPLCLTASLLKTFPRRPDLQRVVVNVSSLAALQPFKSWALYCSGKAARDMIFRVLAEEEKDVRVLNYAPGPLDTDMHVVARTQTADPELRRFLMDRKEKGKMVDIQVSAKKMLDLLEADAYKSGDHIDFFD.

NADP(+) is bound by residues Gly-16–Gly-22, Arg-44–Thr-45, and Asp-71–Leu-72. Substrate is bound by residues Ser-158–Leu-159 and Tyr-171. Lys-175 lines the NADP(+) pocket. Gly-200 is a binding site for substrate. Leu-202–His-207 is a binding site for NADP(+). Asp-258 is a binding site for substrate.

It belongs to the sepiapterin reductase family. Homodimer.

The protein resides in the cytoplasm. It carries out the reaction L-erythro-7,8-dihydrobiopterin + NADP(+) = L-sepiapterin + NADPH + H(+). It catalyses the reaction (6R)-L-erythro-5,6,7,8-tetrahydrobiopterin + 2 NADP(+) = 6-pyruvoyl-5,6,7,8-tetrahydropterin + 2 NADPH + 2 H(+). In terms of biological role, catalyzes the final one or two reductions in tetra-hydrobiopterin biosynthesis to form 5,6,7,8-tetrahydrobiopterin. This Xenopus tropicalis (Western clawed frog) protein is Sepiapterin reductase (spr).